The chain runs to 238 residues: Pyridoxine 5'-phosphate synthase (238 aa).

Asn-7 lines the 3-amino-2-oxopropyl phosphate pocket. A 1-deoxy-D-xylulose 5-phosphate-binding site is contributed by Asp-9 to His-10. Arg-18 serves as a coordination point for 3-amino-2-oxopropyl phosphate. The active-site Proton acceptor is the His-43. 1-deoxy-D-xylulose 5-phosphate is bound by residues Arg-45 and His-50. Catalysis depends on Glu-70, which acts as the Proton acceptor. Residue Thr-100 coordinates 1-deoxy-D-xylulose 5-phosphate. Residue His-190 is the Proton donor of the active site. 3-amino-2-oxopropyl phosphate is bound by residues Gly-191 and Gly-212–His-213.

The protein belongs to the PNP synthase family. Homooctamer; tetramer of dimers.

It is found in the cytoplasm. It carries out the reaction 3-amino-2-oxopropyl phosphate + 1-deoxy-D-xylulose 5-phosphate = pyridoxine 5'-phosphate + phosphate + 2 H2O + H(+). Its pathway is cofactor biosynthesis; pyridoxine 5'-phosphate biosynthesis; pyridoxine 5'-phosphate from D-erythrose 4-phosphate: step 5/5. Functionally, catalyzes the complicated ring closure reaction between the two acyclic compounds 1-deoxy-D-xylulose-5-phosphate (DXP) and 3-amino-2-oxopropyl phosphate (1-amino-acetone-3-phosphate or AAP) to form pyridoxine 5'-phosphate (PNP) and inorganic phosphate. This is Pyridoxine 5'-phosphate synthase from Prochlorococcus marinus subsp. pastoris (strain CCMP1986 / NIES-2087 / MED4).